The chain runs to 321 residues: D-alanine--D-alanine ligase (321 aa).

An ATP-grasp domain is found at arginine 121–lysine 315. Residue proline 147–glutamine 199 participates in ATP binding. Mg(2+) contacts are provided by glutamate 268, glutamate 282, and asparagine 284.

Belongs to the D-alanine--D-alanine ligase family. It depends on Mg(2+) as a cofactor. Mn(2+) serves as cofactor.

The protein localises to the cytoplasm. It catalyses the reaction 2 D-alanine + ATP = D-alanyl-D-alanine + ADP + phosphate + H(+). Its pathway is cell wall biogenesis; peptidoglycan biosynthesis. Cell wall formation. This is D-alanine--D-alanine ligase from Rickettsia rickettsii (strain Iowa).